A 326-amino-acid polypeptide reads, in one-letter code: Gamma-resorcylate decarboxylase (326 aa).

Mn(2+) contacts are provided by Glu-8, His-10, His-164, and Asp-287. Asp-287 is an active-site residue.

The protein belongs to the metallo-dependent hydrolases superfamily. ACMSD family. In terms of assembly, homotetramer. Mn(2+) serves as cofactor.

The enzyme catalyses 2,6-dihydroxybenzoate + H(+) = resorcinol + CO2. It carries out the reaction 2,3-dihydroxybenzoate + H(+) = catechol + CO2. It functions in the pathway aromatic compound metabolism. Activity is inhibited by 2-nitroresorcinol (2-NR). Involved in the gamma-resorcylate (2,6-dihydroxybenzoate) catabolism. Catalyzes the reversible decarboxylation of gamma-resorcylate to resorcinol. Also catalyzes the decarboxylation of 2,3-dihydroxybenzoate to catechol, 2,4,6-trihydroxybenzoate to benzene-1,3,5-triol, and 2,6-dihydroxy-4-methylbenzoate to 5-methylbenzene-1,3-diol. This chain is Gamma-resorcylate decarboxylase, found in Polaromonas sp. (strain JS666 / ATCC BAA-500).